The chain runs to 807 residues: Ribosomal RNA large subunit methyltransferase K/L (807 aa).

A THUMP domain is found at Gln-67–Leu-182. Residues Asn-548–Ser-560 are compositionally biased toward polar residues. Residues Asn-548–Arg-602 form a disordered region. Basic and acidic residues-rich tracts occupy residues Lys-561 to Asn-575 and Gln-584 to Ala-594.

The protein belongs to the methyltransferase superfamily. RlmKL family.

Its subcellular location is the cytoplasm. It carries out the reaction guanosine(2445) in 23S rRNA + S-adenosyl-L-methionine = N(2)-methylguanosine(2445) in 23S rRNA + S-adenosyl-L-homocysteine + H(+). The enzyme catalyses guanosine(2069) in 23S rRNA + S-adenosyl-L-methionine = N(2)-methylguanosine(2069) in 23S rRNA + S-adenosyl-L-homocysteine + H(+). Functionally, specifically methylates the guanine in position 2445 (m2G2445) and the guanine in position 2069 (m7G2069) of 23S rRNA. This Psychrobacter sp. (strain PRwf-1) protein is Ribosomal RNA large subunit methyltransferase K/L.